The chain runs to 307 residues: MTSDLRVSLPGLELKNPIMPASGCFGFGQEYGRYYDLNLLGAFIIKAATKEPRLGNATPRVAETPSGMLNAIGLQNPGIEAIMAEKLPWLAERYPDLPIIANVAGNTEADYVAVCERISQAPNVHAIELNISCPNVAHGGLEFGTSPEAAATLTKACVAVSQVPVYVKLSPNVTDIRPIAKAVEAAGAAGFSLINTLVGMRIDPKTRQPILANQTGGLSGLAIKPVAIRLVHQVRSISNLPIIGMGGVATAGDALELMAAGANAIAVGTANFSEPFACPNIIKALPDELAKYDLHDFKTFAVNQEVL.

FMN-binding positions include serine 22 and 46-47 (KA). Residues lysine 46 and 70-74 (NAIGL) contribute to the substrate site. Asparagine 102 and asparagine 130 together coordinate FMN. Asparagine 130 contacts substrate. The Nucleophile role is filled by cysteine 133. FMN is bound by residues lysine 168 and isoleucine 194. Residue 195–196 (NT) participates in substrate binding. FMN is bound by residues glycine 220, 246-247 (GG), and 268-269 (GT).

Belongs to the dihydroorotate dehydrogenase family. Type 1 subfamily. In terms of assembly, heterotetramer of 2 PyrK and 2 PyrD type B subunits. The cofactor is FMN.

The protein localises to the cytoplasm. It catalyses the reaction (S)-dihydroorotate + NAD(+) = orotate + NADH + H(+). It functions in the pathway pyrimidine metabolism; UMP biosynthesis via de novo pathway; orotate from (S)-dihydroorotate (NAD(+) route): step 1/1. Its function is as follows. Catalyzes the conversion of dihydroorotate to orotate with NAD(+) as electron acceptor. This chain is Dihydroorotate dehydrogenase B (NAD(+)), catalytic subunit (pyrD), found in Latilactobacillus sakei subsp. sakei (strain 23K) (Lactobacillus sakei subsp. sakei).